The following is a 482-amino-acid chain: tRNA sulfurtransferase (482 aa).

Residues 61–165 (AEVLEILTHT…GDKLNQVLAR (105 aa)) enclose the THUMP domain. ATP contacts are provided by residues 183–184 (LI), Lys265, Gly287, and Gln296. An intrachain disulfide couples Cys344 to Cys456. The Rhodanese domain occupies 404 to 482 (VEEHAVVLDI…GFNNVKVYRP (79 aa)). Cys456 serves as the catalytic Cysteine persulfide intermediate.

It belongs to the ThiI family.

The protein localises to the cytoplasm. It catalyses the reaction [ThiI sulfur-carrier protein]-S-sulfanyl-L-cysteine + a uridine in tRNA + 2 reduced [2Fe-2S]-[ferredoxin] + ATP + H(+) = [ThiI sulfur-carrier protein]-L-cysteine + a 4-thiouridine in tRNA + 2 oxidized [2Fe-2S]-[ferredoxin] + AMP + diphosphate. It carries out the reaction [ThiS sulfur-carrier protein]-C-terminal Gly-Gly-AMP + S-sulfanyl-L-cysteinyl-[cysteine desulfurase] + AH2 = [ThiS sulfur-carrier protein]-C-terminal-Gly-aminoethanethioate + L-cysteinyl-[cysteine desulfurase] + A + AMP + 2 H(+). It participates in cofactor biosynthesis; thiamine diphosphate biosynthesis. Its function is as follows. Catalyzes the ATP-dependent transfer of a sulfur to tRNA to produce 4-thiouridine in position 8 of tRNAs, which functions as a near-UV photosensor. Also catalyzes the transfer of sulfur to the sulfur carrier protein ThiS, forming ThiS-thiocarboxylate. This is a step in the synthesis of thiazole, in the thiamine biosynthesis pathway. The sulfur is donated as persulfide by IscS. The sequence is that of tRNA sulfurtransferase from Vibrio parahaemolyticus serotype O3:K6 (strain RIMD 2210633).